An 843-amino-acid chain; its full sequence is Vacuolar membrane protease (843 aa).

Residues 1–16 (MTNSRRHIFERICAKA) are Cytoplasmic-facing. Residues 17 to 37 (FQSSLTCSIFGFTVLLILYLL) form a helical membrane-spanning segment. The Vacuolar segment spans residues 38-347 (DWKRIAQVPG…LAFGKYWQLN (310 aa)). N96, N109, and N117 each carry an N-linked (GlcNAc...) asparagine glycan. Zn(2+)-binding residues include H147 and D159. The Proton acceptor role is filled by E191. Position 192 (E192) interacts with Zn(2+). N-linked (GlcNAc...) asparagine glycosylation is present at N209. E217 lines the Zn(2+) pocket. N-linked (GlcNAc...) asparagine glycosylation is present at N275. H292 is a Zn(2+) binding site. N322 carries N-linked (GlcNAc...) asparagine glycosylation. The helical transmembrane segment at 348–368 (LPIYQVLNIIFAVICPIVLLL) threads the bilayer. At 369–386 (TLIRFPSLYEQLKKPRYT) the chain is on the cytoplasmic side. The chain crosses the membrane as a helical span at residues 387–407 (VCFVVSCIFVSIFDTLTVLLL). Residues 408 to 417 (TWINPYVINS) lie on the Vacuolar side of the membrane. The helical transmembrane segment at 418–438 (HTGLILALFYLTNLIALAFSF) threads the bilayer. Residues 439-456 (RAAATHSKLSSEDLSSIE) lie on the Cytoplasmic side of the membrane. A helical transmembrane segment spans residues 457 to 477 (IVFIWYAQILWYLVFIVSVIL). At 478-484 (SIYFQLG) the chain is on the vacuolar side. The chain crosses the membrane as a helical span at residues 485–505 (STYWVTLSYLCTFTCCIMTII). Residues 506–566 (RINYFVDNVV…NRAHVKLIDN (61 aa)) are Cytoplasmic-facing. Residues 567-587 (IWTVIYFIFNVPFPVFLCYDI) form a helical membrane-spanning segment. Over 588-608 (LVETILPAGSQTLTDSVFSSK) the chain is Vacuolar. A helical transmembrane segment spans residues 609-629 (LYKLVIFVVFLSLVNSGPFIF). Over 630–636 (RALSKKS) the chain is Cytoplasmic. A helical membrane pass occupies residues 637 to 657 (LAVLTMLWITLFVQALSVNPF). Residues 658–843 (TESAPLKLSF…LLKVKSSIVI (186 aa)) are Vacuolar-facing. N-linked (GlcNAc...) asparagine glycans are attached at residues N677, N703, N707, N754, and N788.

It belongs to the peptidase M28 family. It depends on Zn(2+) as a cofactor.

It is found in the membrane. It localises to the vacuole membrane. Functionally, may be involved in vacuolar sorting and osmoregulation. The sequence is that of Vacuolar membrane protease from Schizosaccharomyces pombe (strain 972 / ATCC 24843) (Fission yeast).